The following is a 195-amino-acid chain: ATP-dependent Clp protease proteolytic subunit (195 aa).

Residue S98 is the Nucleophile of the active site. H123 is a catalytic residue.

This sequence belongs to the peptidase S14 family. As to quaternary structure, fourteen ClpP subunits assemble into 2 heptameric rings which stack back to back to give a disk-like structure with a central cavity, resembling the structure of eukaryotic proteasomes.

It is found in the cytoplasm. The catalysed reaction is Hydrolysis of proteins to small peptides in the presence of ATP and magnesium. alpha-casein is the usual test substrate. In the absence of ATP, only oligopeptides shorter than five residues are hydrolyzed (such as succinyl-Leu-Tyr-|-NHMec, and Leu-Tyr-Leu-|-Tyr-Trp, in which cleavage of the -Tyr-|-Leu- and -Tyr-|-Trp bonds also occurs).. Cleaves peptides in various proteins in a process that requires ATP hydrolysis. Has a chymotrypsin-like activity. Plays a major role in the degradation of misfolded proteins. In Helicobacter pylori (strain J99 / ATCC 700824) (Campylobacter pylori J99), this protein is ATP-dependent Clp protease proteolytic subunit.